The chain runs to 229 residues: Sec-independent protein translocase protein TatB (229 aa).

A helical transmembrane segment spans residues 1 to 21; that stretch reads MFDIGFSELLLFGVIALIVLG. Positions 90–131 are disordered; sequence EFEHSQSQNLKTSDKAASPANQANNDSAIQNNNEPATFSYAY. Polar residues predominate over residues 108 to 131; it reads PANQANNDSAIQNNNEPATFSYAY.

Belongs to the TatB family. In terms of assembly, the Tat system comprises two distinct complexes: a TatABC complex, containing multiple copies of TatA, TatB and TatC subunits, and a separate TatA complex, containing only TatA subunits. Substrates initially bind to the TatABC complex, which probably triggers association of the separate TatA complex to form the active translocon.

The protein resides in the cell inner membrane. In terms of biological role, part of the twin-arginine translocation (Tat) system that transports large folded proteins containing a characteristic twin-arginine motif in their signal peptide across membranes. Together with TatC, TatB is part of a receptor directly interacting with Tat signal peptides. TatB may form an oligomeric binding site that transiently accommodates folded Tat precursor proteins before their translocation. The sequence is that of Sec-independent protein translocase protein TatB from Psychrobacter arcticus (strain DSM 17307 / VKM B-2377 / 273-4).